A 470-amino-acid polypeptide reads, in one-letter code: Ribosomal protein uS12 methylthiotransferase RimO (470 aa).

Residues 1–27 (MPCQAPHSDSNVKNPSEATNQKDHSPR) are disordered. The span at 7–19 (HSDSNVKNPSEAT) shows a compositional bias: polar residues. The MTTase N-terminal domain occupies 26–141 (PRVGFVSLGC…VMQAVHTHLP (116 aa)). [4Fe-4S] cluster contacts are provided by Cys-35, Cys-71, Cys-100, Cys-172, Cys-176, and Cys-179. Positions 158–399 (LTPKHYAYLK…MEVAEAVSAR (242 aa)) constitute a Radical SAM core domain. Residues 402-470 (QRKVGQTLRV…ADGHDLWGEV (69 aa)) enclose the TRAM domain.

It belongs to the methylthiotransferase family. RimO subfamily. It depends on [4Fe-4S] cluster as a cofactor.

The protein resides in the cytoplasm. The catalysed reaction is L-aspartate(89)-[ribosomal protein uS12]-hydrogen + (sulfur carrier)-SH + AH2 + 2 S-adenosyl-L-methionine = 3-methylsulfanyl-L-aspartate(89)-[ribosomal protein uS12]-hydrogen + (sulfur carrier)-H + 5'-deoxyadenosine + L-methionine + A + S-adenosyl-L-homocysteine + 2 H(+). Its function is as follows. Catalyzes the methylthiolation of an aspartic acid residue of ribosomal protein uS12. This chain is Ribosomal protein uS12 methylthiotransferase RimO, found in Cupriavidus taiwanensis (strain DSM 17343 / BCRC 17206 / CCUG 44338 / CIP 107171 / LMG 19424 / R1) (Ralstonia taiwanensis (strain LMG 19424)).